Reading from the N-terminus, the 285-residue chain is RING finger protein 223 (285 aa).

The RING-type zinc finger occupies 81–132 (CSICFSGYDNIFKTPKELSCSHVFCLECLARLAAAQPAGRSGREAVPCPFCR). Residues 230 to 250 (VALVSVLLLVLFCVILWPVQC) form a helical membrane-spanning segment.

Its subcellular location is the membrane. This is RING finger protein 223 (Rnf223) from Mus musculus (Mouse).